The following is a 512-amino-acid chain: MRRLWGPGTPFLALLLLVSIKQVTTGSLLEETVQKWAQYKETCLKDLLEKPSGVFCNGTFDKYVCWPHSFPGNVSVPCPSYLPWWNKESPGRAYRHCLAQGTWQKQENSTDTWQDESECSENHSFKQNVDHYHHTLLSTLQLMYTVGYSLSLISLFLALTLFLFLRKLHCTRNYIHMNLFASFILRALVVLVKDMVFYNSYSRRPDSESGWMSYLSEISASCRSVQVLLHYFVGTNHLWLLVEGLYLHALLEPTVLPERRLWPKYLVVGWAFPMLFVIPWIFVRASLENTGCWAVNENKKIWWIIRGPILLCVTVNFFIFLKILKLLISKFRAHQMCFRDYKYRLAKSTLLLILLMGVHEFLFTFFTDDQVQGFSRLIRLFIQLTLSSFHGFLVALQYGFASREVKAELRKTWGRFLLARHWGCRACVLGKNFRFLGKCSKKLSEGDGAETLQKLQSSGVSSHLTAGNLRDHGAQPHRGRGAWPRASSLSESSEGDFTLANTMEEILEESEI.

The Extracellular segment spans residues 1 to 135 (MRRLWGPGTP…KQNVDHYHHT (135 aa)). 3 disulfides stabilise this stretch: Cys-43–Cys-65, Cys-56–Cys-97, and Cys-78–Cys-119. A glycan (N-linked (GlcNAc...) asparagine) is linked at Asn-73. A helical membrane pass occupies residues 136–160 (LLSTLQLMYTVGYSLSLISLFLALT). Topologically, residues 161 to 172 (LFLFLRKLHCTR) are cytoplasmic. A helical transmembrane segment spans residues 173–197 (NYIHMNLFASFILRALVVLVKDMVF). The Extracellular portion of the chain corresponds to 198–223 (YNSYSRRPDSESGWMSYLSEISASCR). Residues 224 to 247 (SVQVLLHYFVGTNHLWLLVEGLYL) form a helical membrane-spanning segment. At 248–261 (HALLEPTVLPERRL) the chain is on the cytoplasmic side. A helical transmembrane segment spans residues 262–283 (WPKYLVVGWAFPMLFVIPWIFV). Over 284–301 (RASLENTGCWAVNENKKI) the chain is Extracellular. Residues 302–324 (WWIIRGPILLCVTVNFFIFLKIL) traverse the membrane as a helical segment. Residues 325-348 (KLLISKFRAHQMCFRDYKYRLAKS) are Cytoplasmic-facing. The chain crosses the membrane as a helical span at residues 349-367 (TLLLILLMGVHEFLFTFFT). Topologically, residues 368–379 (DDQVQGFSRLIR) are extracellular. Residues 380 to 400 (LFIQLTLSSFHGFLVALQYGF) form a helical membrane-spanning segment. Topologically, residues 401–512 (ASREVKAELR…MEEILEESEI (112 aa)) are cytoplasmic. The tract at residues 458-494 (SGVSSHLTAGNLRDHGAQPHRGRGAWPRASSLSESSE) is disordered.

The protein belongs to the G-protein coupled receptor 2 family.

It is found in the cell membrane. Functionally, this is a receptor for glucagon-like peptide 2. The activity of this receptor is mediated by G proteins which activate adenylyl cyclase. This is Glucagon-like peptide 2 receptor (Glp2r) from Mus musculus (Mouse).